An 804-amino-acid polypeptide reads, in one-letter code: Endoplasmin (804 aa).

A signal peptide spans 1–21 (MRALWVLGLCCVLLTFGSVRA). An SRT pseudosubstrate motif motif is present at residues 42–44 (SRT). N-linked (GlcNAc...) asparagine glycosylation is present at asparagine 62. A Phosphoserine modification is found at serine 64. An N-linked (GlcNAc...) asparagine glycan is attached at asparagine 107. ATP is bound by residues asparagine 107, aspartate 149, and asparagine 162. Lysine 168 carries the N6-(2-hydroxyisobutyryl)lysine modification. A Phosphoserine modification is found at serine 172. Phenylalanine 199 serves as a coordination point for ATP. Residue asparagine 217 is glycosylated (N-linked (GlcNAc...) asparagine). A disordered region spans residues 288–323 (TVEEPMEEEEAAKEEKEESDDEAAVEEEEEEKKPKT). Over residues 289–317 (VEEPMEEEEAAKEEKEESDDEAAVEEEEE) the composition is skewed to acidic residues. Serine 306 and serine 403 each carry phosphoserine. Lysine 404 bears the N6-succinyllysine mark. N-linked (GlcNAc...) asparagine glycosylation occurs at asparagine 445. Serine 447 carries the post-translational modification Phosphoserine. Lysine 479 carries the N6-acetyllysine modification. N-linked (GlcNAc...) asparagine glycosylation is found at asparagine 481 and asparagine 502. Residue lysine 633 is modified to N6-succinyllysine. Residues 750 to 804 (DPDAKVEDEPEEEPEETTEDTTEDTEQDEDEEMDVGTDEEEQETAKESTAEKDEL) are disordered. Positions 757-791 (DEPEEEPEETTEDTTEDTEQDEDEEMDVGTDEEEQ) are enriched in acidic residues. Threonine 786 is modified (phosphothreonine). Residues 792 to 804 (ETAKESTAEKDEL) show a composition bias toward basic and acidic residues. The Prevents secretion from ER motif lies at 801 to 804 (KDEL).

This sequence belongs to the heat shock protein 90 family. In terms of assembly, homodimer; disulfide-linked. Component of an EIF2 complex at least composed of CELF1/CUGBP1, CALR, CALR3, EIF2S1, EIF2S2, HSP90B1 and HSPA5. Part of a large chaperone multiprotein complex comprising DNAJB11, HSP90B1, HSPA5, HYOU, PDIA2, PDIA4, PDIA6, PPIB, SDF2L1, UGGT1 and very small amounts of ERP29, but not, or at very low levels, CALR nor CANX. Interacts with AIMP1; regulates its retention in the endoplasmic reticulum. Hyperglycosylated form interacts with OS9; promoting its degradation by the endoplasmic reticulum associated degradation (ERAD). Interacts with CNPY3. This interaction is disrupted in the presence of ATP. Interacts with TLR4 and TLR9, but not with TLR3. Interacts with MZB1 in a calcium-dependent manner. Interacts with METTL23. Interacts with IL1B; the interaction facilitates cargo translocation into the ERGIC. Interacts with EIF2AK3. Phosphorylated by CK2. In terms of processing, N-glycosylated cotranslationally at Asn-217 by STT3A-containing OST-A complex: this glycosylation is constitutive. In response to various stress, 5 additional facultative sites (Asn-62, Asn-107, Asn-445, Asn-481 and Asn-502) can be glycosylated post-translationally by STT3B-containing OST-B complex, leading to a hyperglycosylated form that is degraded by the ER-associated degradation (ERAD) pathway. In normal conditions, the OST-A complex together with CCDC134 prevent glycosylation at facultative sites during protein folding, thereby preventing hyperglycosylation. Mechanistically, nascent HSP90B1 is tethered during translation to a specialized CCDC134-containing translocon that forms a microenvironment for its folding, in which STT3A associates with the SRT pseudosubstrate motif, and prevents access to facultative glycosylation sites until folding is completed, rendering its facultative sites inaccessible to the OST-B complex.

The protein localises to the endoplasmic reticulum lumen. It is found in the sarcoplasmic reticulum lumen. It localises to the melanosome. The enzyme catalyses ATP + H2O = ADP + phosphate + H(+). Its function is as follows. ATP-dependent chaperone involved in the processing of proteins in the endoplasmic reticulum, regulating their transport. Together with MESD, acts as a modulator of the Wnt pathway by promoting the folding of LRP6, a coreceptor of the canonical Wnt pathway. When associated with CNPY3, required for proper folding of Toll-like receptors. Promotes folding and trafficking of TLR4 to the cell surface. May participate in the unfolding of cytosolic leaderless cargos (lacking the secretion signal sequence) such as the interleukin 1/IL-1 to facilitate their translocation into the ERGIC (endoplasmic reticulum-Golgi intermediate compartment) and secretion; the translocation process is mediated by the cargo receptor TMED10. This chain is Endoplasmin (HSP90B1), found in Macaca fascicularis (Crab-eating macaque).